The following is a 60-amino-acid chain: Large ribosomal subunit protein bL32 (60 aa).

The protein belongs to the bacterial ribosomal protein bL32 family.

This is Large ribosomal subunit protein bL32 from Latilactobacillus sakei subsp. sakei (strain 23K) (Lactobacillus sakei subsp. sakei).